The following is a 459-amino-acid chain: Spermidine/putrescine import ATP-binding protein PotA (459 aa).

The region spanning 15–334 (IELIDIVKQF…PRNIWVAKFI (320 aa)) is the ABC transporter domain. Residue 47–54 (GPSGSGKT) participates in ATP binding. Residues 115–203 (RVPKENVKKE…EEFKNKYFKR (89 aa)) form an insert region.

The protein belongs to the ABC transporter superfamily. Spermidine/putrescine importer (TC 3.A.1.11.1) family. The complex is composed of two ATP-binding proteins (PotA), two transmembrane proteins (PotB and PotC) and a solute-binding protein (PotD).

It localises to the cell membrane. The enzyme catalyses ATP + H2O + polyamine-[polyamine-binding protein]Side 1 = ADP + phosphate + polyamineSide 2 + [polyamine-binding protein]Side 1.. Part of the ABC transporter complex PotABCD involved in spermidine/putrescine import. Responsible for energy coupling to the transport system. The chain is Spermidine/putrescine import ATP-binding protein PotA from Mycoplasmopsis synoviae (strain 53) (Mycoplasma synoviae).